A 398-amino-acid polypeptide reads, in one-letter code: Na(+)/H(+) antiporter NhaA (398 aa).

Transmembrane regions (helical) follow at residues 21–41, 56–76, 94–114, 124–144, 153–173, 176–196, 201–221, 263–283, 284–304, 306–326, 333–353, and 367–387; these read AGGIILMVAAALALIVANSPL, LSVSHWVNDGLMAVFFLLVGL, VLPGIAAAGGMLVPALVYVFI, GWAIPTATDIAFALGVLSLLG, VFLTALAIIDDLGAVIIIAIF, SGLSLAYLGAAFAVIAALVVL, VMTLLPYLVLGAILWVLVLKS, IVPFFVIPIFGFANAGVSLAG, LSLGALIEPLTLGVAAGLVVG, LVGVFGSSALAIRLGLADLPA, MIGISLLCGIGFTMSLFIGLL, and VGILAGSFVAAILGAAVLLMA.

Belongs to the NhaA Na(+)/H(+) (TC 2.A.33) antiporter family.

The protein localises to the cell inner membrane. It carries out the reaction Na(+)(in) + 2 H(+)(out) = Na(+)(out) + 2 H(+)(in). Na(+)/H(+) antiporter that extrudes sodium in exchange for external protons. The chain is Na(+)/H(+) antiporter NhaA from Mesorhizobium japonicum (strain LMG 29417 / CECT 9101 / MAFF 303099) (Mesorhizobium loti (strain MAFF 303099)).